Here is an 85-residue protein sequence, read N- to C-terminus: Small ribosomal subunit protein uS15c (85 aa).

Belongs to the universal ribosomal protein uS15 family. In terms of assembly, part of the 30S ribosomal subunit.

It localises to the plastid. The protein resides in the chloroplast. The polypeptide is Small ribosomal subunit protein uS15c (rps15) (Chaetosphaeridium globosum (Charophycean green alga)).